The chain runs to 365 residues: tRNA/tmRNA (uracil-C(5))-methyltransferase (365 aa).

Positions 189, 217, 222, 238, and 298 each coordinate S-adenosyl-L-methionine. Cys-323 serves as the catalytic Nucleophile. The active-site Proton acceptor is Glu-357.

This sequence belongs to the class I-like SAM-binding methyltransferase superfamily. RNA M5U methyltransferase family. TrmA subfamily.

It carries out the reaction uridine(54) in tRNA + S-adenosyl-L-methionine = 5-methyluridine(54) in tRNA + S-adenosyl-L-homocysteine + H(+). The enzyme catalyses uridine(341) in tmRNA + S-adenosyl-L-methionine = 5-methyluridine(341) in tmRNA + S-adenosyl-L-homocysteine + H(+). Its function is as follows. Dual-specificity methyltransferase that catalyzes the formation of 5-methyluridine at position 54 (m5U54) in all tRNAs, and that of position 341 (m5U341) in tmRNA (transfer-mRNA). The protein is tRNA/tmRNA (uracil-C(5))-methyltransferase of Shewanella sp. (strain MR-4).